Here is a 361-residue protein sequence, read N- to C-terminus: Chorismate synthase (361 aa).

NADP(+) is bound by residues arginine 48 and arginine 54. Residues 131 to 133 (RSS), 243 to 244 (NA), glycine 287, 302 to 306 (KPTSS), and arginine 328 each bind FMN.

The protein belongs to the chorismate synthase family. Homotetramer. It depends on FMNH2 as a cofactor.

It catalyses the reaction 5-O-(1-carboxyvinyl)-3-phosphoshikimate = chorismate + phosphate. The protein operates within metabolic intermediate biosynthesis; chorismate biosynthesis; chorismate from D-erythrose 4-phosphate and phosphoenolpyruvate: step 7/7. Functionally, catalyzes the anti-1,4-elimination of the C-3 phosphate and the C-6 proR hydrogen from 5-enolpyruvylshikimate-3-phosphate (EPSP) to yield chorismate, which is the branch point compound that serves as the starting substrate for the three terminal pathways of aromatic amino acid biosynthesis. This reaction introduces a second double bond into the aromatic ring system. The sequence is that of Chorismate synthase from Rhodopseudomonas palustris (strain BisB5).